The following is a 314-amino-acid chain: Acetaldehyde dehydrogenase 1/2 (314 aa).

Residue 12 to 15 (SGNI) coordinates NAD(+). Residue cysteine 130 is the Acyl-thioester intermediate of the active site. NAD(+)-binding positions include 161-169 (SAGPGTRAN) and asparagine 288.

It belongs to the acetaldehyde dehydrogenase family.

The catalysed reaction is acetaldehyde + NAD(+) + CoA = acetyl-CoA + NADH + H(+). This chain is Acetaldehyde dehydrogenase 1/2, found in Rhizorhabdus wittichii (strain DSM 6014 / CCUG 31198 / JCM 15750 / NBRC 105917 / EY 4224 / RW1) (Sphingomonas wittichii).